The following is a 363-amino-acid chain: Histidinol-phosphate aminotransferase (363 aa).

K215 carries the post-translational modification N6-(pyridoxal phosphate)lysine.

It belongs to the class-II pyridoxal-phosphate-dependent aminotransferase family. Histidinol-phosphate aminotransferase subfamily. Homodimer. The cofactor is pyridoxal 5'-phosphate.

It carries out the reaction L-histidinol phosphate + 2-oxoglutarate = 3-(imidazol-4-yl)-2-oxopropyl phosphate + L-glutamate. Its pathway is amino-acid biosynthesis; L-histidine biosynthesis; L-histidine from 5-phospho-alpha-D-ribose 1-diphosphate: step 7/9. This Buchnera aphidicola subsp. Diuraphis noxia protein is Histidinol-phosphate aminotransferase.